The chain runs to 80 residues: Acyl carrier protein (80 aa).

The Carrier domain maps to 2–77 (SDTLKRLQKI…DALNYIENKI (76 aa)). Ser37 carries the post-translational modification O-(pantetheine 4'-phosphoryl)serine.

The protein belongs to the acyl carrier protein (ACP) family. 4'-phosphopantetheine is transferred from CoA to a specific serine of apo-ACP by AcpS. This modification is essential for activity because fatty acids are bound in thioester linkage to the sulfhydryl of the prosthetic group.

The protein localises to the plastid. It is found in the chloroplast. It participates in lipid metabolism; fatty acid biosynthesis. Its function is as follows. Carrier of the growing fatty acid chain in fatty acid biosynthesis. The chain is Acyl carrier protein from Cylindrotheca sp. (strain N1) (Marine diatom).